A 290-amino-acid chain; its full sequence is Glutaredoxin domain-containing cysteine-rich protein 1 (290 aa).

In terms of domain architecture, Glutaredoxin spans 127–234 (LQQPSADLEF…DLLTKIERVQ (108 aa)).

Belongs to the GRXCR1 family. In the inner ear, expressed predominantly in sensory hair cells and their stereocilia bundles with higher levels in outer hair cells (OHC) at P1 and in inner hair cells (IHC) at P5. At P1, expression is prominent in each row of stereocilia within bundles including immature shorter stereocilia. Expression is also observed in apical microvilli of sensory cells at P1 and in kinocilia at P1 and P5. In the adult, expression is localized throughout the length of the stereocilia of both OHC and IHC (at protein level).

It is found in the cell projection. The protein localises to the stereocilium. Its subcellular location is the microvillus. It localises to the kinocilium. Functionally, may play a role in actin filament architecture in developing stereocilia of sensory cells. The sequence is that of Glutaredoxin domain-containing cysteine-rich protein 1 (Grxcr1) from Mus musculus (Mouse).